Here is a 306-residue protein sequence, read N- to C-terminus: D-alanine--D-alanine ligase (306 aa).

Positions 102–300 (KHVAKAAGIP…FGEFLRWMVE (199 aa)) constitute an ATP-grasp domain. An ATP-binding site is contributed by 128–183 (PMKPPYVVKPVREGSSFGVVIVKEDQSHPPQVITSSEWRYGDRVMVERYIAGRELT). Asp-252, Glu-267, and Asn-269 together coordinate Mg(2+).

It belongs to the D-alanine--D-alanine ligase family. Mg(2+) is required as a cofactor. Mn(2+) serves as cofactor.

It localises to the cytoplasm. It catalyses the reaction 2 D-alanine + ATP = D-alanyl-D-alanine + ADP + phosphate + H(+). Its pathway is cell wall biogenesis; peptidoglycan biosynthesis. Cell wall formation. This chain is D-alanine--D-alanine ligase, found in Sinorhizobium fredii (strain NBRC 101917 / NGR234).